Here is a 321-residue protein sequence, read N- to C-terminus: uncharacterized protein (321 aa).

Helical transmembrane passes span 10–28 (LWCS…EMSI), 41–63 (IALY…IWIY), 94–111 (NVAM…SMVH), 116–138 (LFYG…VWLL), 143–165 (FLFY…SNGV), 200–222 (NGVI…DIIF), 237–259 (PFII…VILA), 266–283 (YIIK…SIKI), and 293–315 (IMLS…KFFF).

Belongs to the TerC family.

It is found in the cell membrane. This is an uncharacterized protein from Buchnera aphidicola subsp. Baizongia pistaciae (strain Bp).